Reading from the N-terminus, the 620-residue chain is Glutathione-regulated potassium-efflux system protein KefC (620 aa).

12 consecutive transmembrane segments (helical) span residues 4 to 24 (HTLLQALIYLGSAALIVPIAV), 26 to 46 (LGLGSVLGYLIAGCIIGPWGL), 54 to 74 (SILHFAEIGVVLMLFVIGLEL), 90 to 110 (GALQMVVCGGLIGLFCMFLGL), 114 to 134 (VAELIGMTLALSSTAIAMQAM), 149 to 169 (FAVLLFQDIAAIPLVAMIPLL), 178 to 198 (LGAFALSALKVAGALALVVVL), 218 to 238 (VFSAVALFLVFGFGLLLEEVG), 270 to 290 (GLLLGLFFIGVGMSIDFGTLV), 294 to 314 (LRILLLLAGFLAIKIVMLWLV), 327 to 347 (WFAVLLGQGSEFAFVVFGAAQ), and 359 to 379 (ALTLAVALSMAATPIFLVLLT). The RCK N-terminal domain maps to 399 to 518 (QPRVIVAGFG…AGVAMPERET (120 aa)). The interval 599-620 (QGTAEGKHSGEVADEPEVKPSI) is disordered.

This sequence belongs to the monovalent cation:proton antiporter 2 (CPA2) transporter (TC 2.A.37) family. KefC subfamily. As to quaternary structure, homodimer. Interacts with the regulatory subunit KefF.

The protein localises to the cell inner membrane. Pore-forming subunit of a potassium efflux system that confers protection against electrophiles. Catalyzes K(+)/H(+) antiport. The protein is Glutathione-regulated potassium-efflux system protein KefC of Salmonella paratyphi B (strain ATCC BAA-1250 / SPB7).